The chain runs to 130 residues: Fluoride-specific ion channel FluC (130 aa).

Helical transmembrane passes span 2–22 (GLLL…RFAL), 36–56 (GILL…AFLI), 71–91 (FLLV…SLDI), and 100–120 (IFIA…AVIL). Positions 79 and 82 each coordinate Na(+).

It belongs to the fluoride channel Fluc/FEX (TC 1.A.43) family.

The protein resides in the cell inner membrane. It catalyses the reaction fluoride(in) = fluoride(out). With respect to regulation, na(+) is not transported, but it plays an essential structural role and its presence is essential for fluoride channel function. In terms of biological role, fluoride-specific ion channel. Important for reducing fluoride concentration in the cell, thus reducing its toxicity. The protein is Fluoride-specific ion channel FluC of Francisella tularensis subsp. mediasiatica (strain FSC147).